The primary structure comprises 384 residues: BTB and MATH domain-containing protein 34 (384 aa).

Residues 41 to 127 (LNGNTTLKRI…ELKFQKEQLK (87 aa)) are a coiled coil. An MATH domain is found at 167 to 277 (EFSHTFNSVA…VFNFGEYEEI (111 aa)). One can recognise a BTB domain in the interval 317-380 (SDAVMIVKDE…LYGEPALTGR (64 aa)).

The protein is BTB and MATH domain-containing protein 34 (bath-34) of Caenorhabditis elegans.